The primary structure comprises 455 residues: 2-succinylbenzoate--CoA ligase (455 aa).

Belongs to the ATP-dependent AMP-binding enzyme family. MenE subfamily.

The enzyme catalyses 2-succinylbenzoate + ATP + CoA = 2-succinylbenzoyl-CoA + AMP + diphosphate. The protein operates within quinol/quinone metabolism; 1,4-dihydroxy-2-naphthoate biosynthesis; 1,4-dihydroxy-2-naphthoate from chorismate: step 5/7. Its pathway is quinol/quinone metabolism; menaquinone biosynthesis. Converts 2-succinylbenzoate (OSB) to 2-succinylbenzoyl-CoA (OSB-CoA). This is 2-succinylbenzoate--CoA ligase from Salmonella typhimurium (strain LT2 / SGSC1412 / ATCC 700720).